The sequence spans 288 residues: F420-non-reducing hydrogenase vhu subunit G (288 aa).

Belongs to the [NiFe]/[NiFeSe] hydrogenase small subunit family. As to quaternary structure, the F420-non-reducing hydrogenase vhu is composed of four subunits; VhuA, VhuD, VhuG and VhuU.

In Methanocaldococcus jannaschii (strain ATCC 43067 / DSM 2661 / JAL-1 / JCM 10045 / NBRC 100440) (Methanococcus jannaschii), this protein is F420-non-reducing hydrogenase vhu subunit G (vhuG).